Here is a 263-residue protein sequence, read N- to C-terminus: Cell division protein DivIB (263 aa).

At 1-32 the chain is on the cytoplasmic side; that stretch reads MNPGQDREKIVNIEERIPKIKEQRKQKANRRL. The chain crosses the membrane as a helical span at residues 33–53; sequence ISFIMLFFIMVLIIVYLQTPI. An alpha region spans residues 51-123; that stretch reads TPISKVSTIS…NKINIAIEEY (73 aa). Residues 54–123 enclose the POTRA domain; that stretch reads SKVSTISVTG…NKINIAIEEY (70 aa). Residues 54–263 are Extracellular-facing; it reads SKVSTISVTG…DKAAKKEDEN (210 aa). The tract at residues 124–251 is beta; the sequence is KAIAYLEKDD…EVATYFEEFG (128 aa). A gamma region spans residues 229-263; it reads SQLSSNKKGIIHLEVATYFEEFGKNDKAAKKEDEN.

The protein belongs to the FtsQ/DivIB family. DivIB subfamily. As to quaternary structure, interacts with FtsL, DivIC and PBP-2B.

It localises to the cell membrane. Cell division protein that may be involved in stabilizing or promoting the assembly of the division complex. Plays an essential role in division at high temperatures, maybe by protecting FtsL from degradation or by promoting formation of the FtsL-DivIC complex. May modulate the transpeptidase activity of PBP-2B. Also required for efficient sporulation at all temperatures. Could be directly involved in the engulfment process or be required to form a sporulation septum competent for engulfment. Influences the Spo0J/Soj system of chromosome segregation. The sequence is that of Cell division protein DivIB from Bacillus subtilis (strain 168).